The following is a 215-amino-acid chain: Probable transaldolase (215 aa).

Catalysis depends on Lys83, which acts as the Schiff-base intermediate with substrate.

The protein belongs to the transaldolase family. Type 3B subfamily.

It localises to the cytoplasm. It catalyses the reaction D-sedoheptulose 7-phosphate + D-glyceraldehyde 3-phosphate = D-erythrose 4-phosphate + beta-D-fructose 6-phosphate. Its pathway is carbohydrate degradation; pentose phosphate pathway; D-glyceraldehyde 3-phosphate and beta-D-fructose 6-phosphate from D-ribose 5-phosphate and D-xylulose 5-phosphate (non-oxidative stage): step 2/3. Transaldolase is important for the balance of metabolites in the pentose-phosphate pathway. The chain is Probable transaldolase from Clostridium kluyveri (strain NBRC 12016).